The sequence spans 133 residues: Alpha-amylase inhibitor/endochitinase (133 aa).

Catalysis depends on Glu-30, which acts as the Proton donor.

The protein belongs to the glycosyl hydrolase 19 family. Chitinase class I subfamily.

The enzyme catalyses Random endo-hydrolysis of N-acetyl-beta-D-glucosaminide (1-&gt;4)-beta-linkages in chitin and chitodextrins.. Its function is as follows. This protein functions both as an alpha-amylase inhibitor and as a chitinase. In Coix lacryma-jobi (Job's tears), this protein is Alpha-amylase inhibitor/endochitinase.